The primary structure comprises 583 residues: Putative amidase C869.01 (583 aa).

Positions 1 to 19 are cleaved as a signal peptide; it reads MKLQLLFLTLAQLAKHGLA. Residues Lys-141 and Ser-222 each act as charge relay system in the active site. Ser-246 functions as the Acyl-ester intermediate in the catalytic mechanism.

Belongs to the amidase family.

The protein resides in the cytoplasm. The enzyme catalyses a monocarboxylic acid amide + H2O = a monocarboxylate + NH4(+). The protein is Putative amidase C869.01 of Schizosaccharomyces pombe (strain 972 / ATCC 24843) (Fission yeast).